A 1234-amino-acid chain; its full sequence is PAN2-PAN3 deadenylation complex catalytic subunit PAN2 (1234 aa).

The tract at residues Leu12–Val32 is disordered. Positions Asn14 to Asn30 are enriched in low complexity. WD repeat units follow at residues Asn176–Thr213, Ala272–Ala315, and Gln342–Lys381. The interval Pro323 to His346 is disordered. Low complexity predominate over residues Gln333–Gln344. A linker region spans residues Phe383–Glu537. Residues Lys538–Val946 enclose the USP domain. The interval Pro751–Asn775 is disordered. Over residues Gln754–Gln772 the composition is skewed to low complexity. Residues Asp1004, Glu1006, Asp1138, and Asp1191 each coordinate a divalent metal cation. One can recognise an Exonuclease domain in the interval Gly1072 to Tyr1199.

This sequence belongs to the peptidase C19 family. PAN2 subfamily. Forms a heterotrimer with an asymmetric homodimer of the regulatory subunit PAN3 to form the poly(A)-nuclease (PAN) deadenylation complex. It depends on a divalent metal cation as a cofactor.

The protein localises to the cytoplasm. The enzyme catalyses Exonucleolytic cleavage of poly(A) to 5'-AMP.. Positively regulated by the regulatory subunit PAN3. Its function is as follows. Catalytic subunit of the poly(A)-nuclease (PAN) deadenylation complex, one of two cytoplasmic mRNA deadenylases involved in mRNA turnover. PAN specifically shortens poly(A) tails of RNA and the activity is stimulated by poly(A)-binding protein PAB1. PAN deadenylation is followed by rapid degradation of the shortened mRNA tails by the CCR4-NOT complex. Deadenylated mRNAs are then degraded by two alternative mechanisms, namely exosome-mediated 3'-5' exonucleolytic degradation, or deadenylation-dependent mRNA decaping and subsequent 5'-3' exonucleolytic degradation by XRN1. May also be involved in post-transcriptional maturation of mRNA poly(A) tails. The protein is PAN2-PAN3 deadenylation complex catalytic subunit PAN2 of Lodderomyces elongisporus (strain ATCC 11503 / CBS 2605 / JCM 1781 / NBRC 1676 / NRRL YB-4239) (Yeast).